We begin with the raw amino-acid sequence, 471 residues long: Putative multidrug resistance protein MdtD (471 aa).

Residues M1 to Q11 lie on the Periplasmic side of the membrane. A helical transmembrane segment spans residues L12–A32. Residues L33–H48 are Cytoplasmic-facing. Residues M49 to A69 form a helical membrane-spanning segment. The Periplasmic segment spans residues D70–N76. Residues I77–T97 traverse the membrane as a helical segment. Residues L98–L101 are Cytoplasmic-facing. Residues L102–M124 form a helical membrane-spanning segment. Residues K125–T137 lie on the Periplasmic side of the membrane. Residues F138–V158 traverse the membrane as a helical segment. The Cytoplasmic portion of the chain corresponds to E159–H164. The chain crosses the membrane as a helical span at residues W165 to M185. Residues P186–D196 lie on the Periplasmic side of the membrane. A helical membrane pass occupies residues L197 to S217. Over K218 to P224 the chain is Cytoplasmic. A helical transmembrane segment spans residues L225–A245. Topologically, residues R246–T262 are periplasmic. Residues F263–M283 form a helical membrane-spanning segment. The Cytoplasmic portion of the chain corresponds to T284 to P285. A helical transmembrane segment spans residues V286 to M306. Residues V307 to T341 are Periplasmic-facing. Residues L342 to L362 form a helical membrane-spanning segment. The Cytoplasmic portion of the chain corresponds to Q363–S395. The chain crosses the membrane as a helical span at residues M396–F416. The Periplasmic portion of the chain corresponds to G417–T430. A helical membrane pass occupies residues V431 to A451. Over R452–Q471 the chain is Cytoplasmic.

Belongs to the major facilitator superfamily. TCR/Tet family.

The protein localises to the cell inner membrane. The chain is Putative multidrug resistance protein MdtD from Escherichia coli O157:H7.